Reading from the N-terminus, the 31-residue chain is GSVFNCGETCVLGTCYTPGCTCNTYRVCTKD.

The segment at residues glycine 1 to aspartate 31 is a cross-link (cyclopeptide (Gly-Asp)). 3 disulfide bridges follow: cysteine 6–cysteine 20, cysteine 10–cysteine 22, and cysteine 15–cysteine 28.

The protein belongs to the cyclotide family. Bracelet subfamily. Post-translationally, this peptide occurs in both cyclic and linear forms.

Its function is as follows. Probably participates in a plant defense mechanism. This Oldenlandia affinis protein is Kalata-B9.